The following is a 109-amino-acid chain: Iron-sulfur cluster assembly protein CyaY (109 aa).

Belongs to the frataxin family.

Involved in iron-sulfur (Fe-S) cluster assembly. May act as a regulator of Fe-S biogenesis. The chain is Iron-sulfur cluster assembly protein CyaY from Acidovorax ebreus (strain TPSY) (Diaphorobacter sp. (strain TPSY)).